We begin with the raw amino-acid sequence, 490 residues long: Cardiolipin synthase A (490 aa).

Transmembrane regions (helical) follow at residues 4–24 (YLFTITTWLIIISYWFIIIIV) and 39–59 (AAWLLVIYIIPFIGICTWFLL). PLD phosphodiesterase domains lie at 220-247 (MDLRQHRKFILIDNYITYIGSMNLVDPY) and 403-430 (KKGLLHSKSVLVDKQLSLIGTVNLDMRS). Residues His-225, Lys-227, Asp-232, His-408, Lys-410, and Asp-415 contribute to the active site.

The protein belongs to the phospholipase D family. Cardiolipin synthase subfamily. ClsA sub-subfamily.

It is found in the cell membrane. It catalyses the reaction 2 a 1,2-diacyl-sn-glycero-3-phospho-(1'-sn-glycerol) = a cardiolipin + glycerol. Its function is as follows. Catalyzes the reversible phosphatidyl group transfer from one phosphatidylglycerol molecule to another to form cardiolipin (CL) (diphosphatidylglycerol) and glycerol. This chain is Cardiolipin synthase A, found in Buchnera aphidicola subsp. Baizongia pistaciae (strain Bp).